The chain runs to 137 residues: Nucleoside diphosphate kinase (137 aa).

ATP-binding residues include lysine 9, phenylalanine 57, arginine 85, threonine 91, arginine 102, and asparagine 112. Histidine 115 serves as the catalytic Pros-phosphohistidine intermediate.

It belongs to the NDK family. In terms of assembly, homotetramer. Mg(2+) is required as a cofactor.

The protein resides in the cytoplasm. The enzyme catalyses a 2'-deoxyribonucleoside 5'-diphosphate + ATP = a 2'-deoxyribonucleoside 5'-triphosphate + ADP. It catalyses the reaction a ribonucleoside 5'-diphosphate + ATP = a ribonucleoside 5'-triphosphate + ADP. Its function is as follows. Major role in the synthesis of nucleoside triphosphates other than ATP. The ATP gamma phosphate is transferred to the NDP beta phosphate via a ping-pong mechanism, using a phosphorylated active-site intermediate. The protein is Nucleoside diphosphate kinase of Campylobacter jejuni subsp. jejuni serotype O:2 (strain ATCC 700819 / NCTC 11168).